We begin with the raw amino-acid sequence, 150 residues long: MVSVKYVPSDMLINYVSGKLKEEKKIKEPNWVKFVKTGVSKEKPPLQDDWIYVRAASMLRKLYINGYLGISRMSSEYGGKVDRGSKRYHAASGSRSITRFLFHELESAGLVQKTQKGRSLSPQGMSLLDNASKEIIKQLAQKDPLYEKFI.

The protein belongs to the eukaryotic ribosomal protein eS19 family. In terms of assembly, part of the 30S ribosomal subunit.

Its function is as follows. May be involved in maturation of the 30S ribosomal subunit. The chain is Small ribosomal subunit protein eS19 from Thermoplasma volcanium (strain ATCC 51530 / DSM 4299 / JCM 9571 / NBRC 15438 / GSS1).